Here is a 175-residue protein sequence, read N- to C-terminus: Co-chaperone protein HscB homolog (175 aa).

Positions 7-79 (SHFDLFDLPA…LKRATYLLHL (73 aa)) constitute a J domain.

This sequence belongs to the HscB family. Interacts with HscA and stimulates its ATPase activity.

Co-chaperone involved in the maturation of iron-sulfur cluster-containing proteins. Seems to help targeting proteins to be folded toward HscA. This is Co-chaperone protein HscB homolog from Paraburkholderia xenovorans (strain LB400).